The following is a 206-amino-acid chain: SOSS complex subunit B2 (206 aa).

Positions 26-89 (IVLEIGRVTK…SMWKGCLTLY (64 aa)) form a DNA-binding region, OB. Disordered stretches follow at residues 114-146 (EPNP…GTGT) and 166-206 (SYAG…AFKR). Over residues 181–196 (LPGTANNQTVMTTISN) the composition is skewed to polar residues.

It belongs to the SOSS-B family. SOSS-B2 subfamily. In terms of assembly, component of the SOSS complex, composed of SOSS-B (SOSS-B1/NABP2 or SOSS-B2/NABP1), SOSS-A/INTS3 and SOSS-C/INIP. SOSS complexes containing SOSS-B1/NABP2 are more abundant than complexes containing SOSS-B2/NABP1.

Its subcellular location is the nucleus. In terms of biological role, component of the SOSS complex, a multiprotein complex that functions downstream of the MRN complex to promote DNA repair and G2/M checkpoint. In the SOSS complex, acts as a sensor of single-stranded DNA that binds to single-stranded DNA, in particular to polypyrimidines. The SOSS complex associates with DNA lesions and influences diverse endpoints in the cellular DNA damage response including cell-cycle checkpoint activation, recombinational repair and maintenance of genomic stability. Required for efficient homologous recombination-dependent repair of double-strand breaks (DSBs) and ATM-dependent signaling pathways. This is SOSS complex subunit B2 (NABP1) from Bos taurus (Bovine).